Consider the following 530-residue polypeptide: Bifunctional purine biosynthesis protein PurH (530 aa).

In terms of domain architecture, MGS-like spans 1–148 (MEQARPIRRA…KNHKDVAIVV (148 aa)).

Belongs to the PurH family.

The catalysed reaction is (6R)-10-formyltetrahydrofolate + 5-amino-1-(5-phospho-beta-D-ribosyl)imidazole-4-carboxamide = 5-formamido-1-(5-phospho-D-ribosyl)imidazole-4-carboxamide + (6S)-5,6,7,8-tetrahydrofolate. It catalyses the reaction IMP + H2O = 5-formamido-1-(5-phospho-D-ribosyl)imidazole-4-carboxamide. The protein operates within purine metabolism; IMP biosynthesis via de novo pathway; 5-formamido-1-(5-phospho-D-ribosyl)imidazole-4-carboxamide from 5-amino-1-(5-phospho-D-ribosyl)imidazole-4-carboxamide (10-formyl THF route): step 1/1. It participates in purine metabolism; IMP biosynthesis via de novo pathway; IMP from 5-formamido-1-(5-phospho-D-ribosyl)imidazole-4-carboxamide: step 1/1. The sequence is that of Bifunctional purine biosynthesis protein PurH from Aeromonas salmonicida (strain A449).